Consider the following 328-residue polypeptide: Aspartate carbamoyltransferase catalytic subunit (328 aa).

2 residues coordinate carbamoyl phosphate: Arg55 and Thr56. Residue Lys83 coordinates L-aspartate. Residues Arg105, His135, and Gln138 each contribute to the carbamoyl phosphate site. 2 residues coordinate L-aspartate: Arg176 and Arg230. Carbamoyl phosphate is bound by residues Gly271 and Pro272.

It belongs to the aspartate/ornithine carbamoyltransferase superfamily. ATCase family. As to quaternary structure, heterododecamer (2C3:3R2) of six catalytic PyrB chains organized as two trimers (C3), and six regulatory PyrI chains organized as three dimers (R2).

It carries out the reaction carbamoyl phosphate + L-aspartate = N-carbamoyl-L-aspartate + phosphate + H(+). It participates in pyrimidine metabolism; UMP biosynthesis via de novo pathway; (S)-dihydroorotate from bicarbonate: step 2/3. In terms of biological role, catalyzes the condensation of carbamoyl phosphate and aspartate to form carbamoyl aspartate and inorganic phosphate, the committed step in the de novo pyrimidine nucleotide biosynthesis pathway. The protein is Aspartate carbamoyltransferase catalytic subunit of Streptomyces griseus subsp. griseus (strain JCM 4626 / CBS 651.72 / NBRC 13350 / KCC S-0626 / ISP 5235).